Consider the following 675-residue polypeptide: Protein PALS1 (675 aa).

A disordered region spans residues 1 to 78; sequence MTTSHMNGHV…RREEEGKKQE (78 aa). The required for the correct localization of PALS1 and PATJ at cell-cell contacts and the normal formation of tight junctions and adherens junctions stretch occupies residues 1-345; the sequence is MTTSHMNGHV…QQIKPPPAKE (345 aa). Composition is skewed to basic and acidic residues over residues 10 to 36 and 54 to 78; these read VTEE…REMA and AQLE…KKQE. 2 positions are modified to phosphoserine: serine 14 and serine 25. Residues 21–140 are interaction with PARD6B; sequence VDLASPEEHQ…LKHIQHTLVD (120 aa). Phosphoserine occurs at positions 83 and 84. L27 domains lie at 120 to 177 and 179 to 235; these read KILE…NKAS and PFPL…MQLE. The segment at 181 to 243 is interaction with LIN7C; the sequence is PLISNAQDLA…LEPFTDERVY (63 aa). One can recognise a PDZ domain in the interval 256-336; the sequence is IVRIEKARDI…TLTFVLIPSQ (81 aa). Positions 345 to 417 constitute an SH3 domain; sequence ETVIHVKAHF…PGKSFQQQRE (73 aa). Residues 479 to 660 form the Guanylate kinase-like domain; that stretch reads KRPIILIGPQ…AYQELLRLIN (182 aa). 486-493 contributes to the ATP binding site; the sequence is GPQNCGQN.

The protein belongs to the MAGUK family. In terms of assembly, heterodimer with MPP1. Forms a heterotrimeric complex composed of PALS1, LIN7B and PATJ; the N-terminal L27 domain of PALS1 interacts with the L27 domain of PATJ and the C-terminal L27 domain of PALS1 interacts with the L27 domain of LIN7B. Component of a complex composed of PALS1, CRB1 and MPP4. Component of a complex whose core is composed of ARHGAP17, AMOT, PALS1, PATJ and PARD3/PAR3. Component of a complex composed of PALS1, CRB1 and EPB41L5. Within the complex, interacts (via HOOK domain) with EPB41L5 (via FERM domain), and interacts with CRB1 (via intracellular domain). Component of a complex composed of PALS1, MPP3 and CRB1; PALS1 acts as a bridging protein between MPP3 (via guanylate kinase-like domain) and CRB1. Component of a complex composed of CRB3, PALS1 and PATJ. As part of the Crumbs complex; interacts with WWP1, the interaction is enhanced by AMOTL2 and facilitates WWP1 localization to the plasma membrane. The Crumbs complex promotes monoubiquitination of AMOTL2 by WWP1, which activates the Hippo signaling pathway. Interacts (via PDZ domain) with PATJ (via N-terminus). Interacts with EZR. Interacts (via PDZ domain) with CRB1 (via C-terminal ERLI motif). While the PDZ domain is sufficient for interaction with CRB1, the adjacent SH3 and guanylate kinase-like domains are likely to contribute to a high affinity interaction. Interacts with WWTR1/TAZ (via WW domain). Interacts with MPP7. Interacts (via PDZ domain) with CRB3 (via C-terminus). Interacts with LIN7C. Interacts with MPDZ. Interacts with PARD6B. Interacts with SC6A1. Interacts with CDH5; the interaction promotes PALS1 localization to cell junctions and is required for CDH5-mediated vascular lumen formation and endothelial cell. Interacts with NPHP1 (via coiled coil and SH3 domains). Interacts with NPHP4. Interacts with CRB2.

It localises to the golgi apparatus. The protein resides in the cell membrane. Its subcellular location is the endomembrane system. The protein localises to the cell junction. It is found in the tight junction. It localises to the adherens junction. The protein resides in the cell projection. Its subcellular location is the axon. The protein localises to the perikaryon. It is found in the apical cell membrane. Plays a role in tight junction biogenesis and in the establishment of cell polarity in epithelial cells. Also involved in adherens junction biogenesis by ensuring correct localization of the exocyst complex protein EXOC4/SEC8 which allows trafficking of adherens junction structural component CDH1 to the cell surface. Plays a role through its interaction with CDH5 in vascular lumen formation and endothelial membrane polarity. Required during embryonic and postnatal retinal development. Required for the maintenance of cerebellar progenitor cells in an undifferentiated proliferative state, preventing premature differentiation, and is required for cerebellar histogenesis, fissure formation, cerebellar layer organization and cortical development. Plays a role in neuronal progenitor cell survival, potentially via promotion of mTOR signaling. Plays a role in the radial and longitudinal extension of the myelin sheath in Schwann cells. May modulate SC6A1/GAT1-mediated GABA uptake by stabilizing the transporter. May play a role in the T-cell receptor-mediated activation of NF-kappa-B. Required for localization of EZR to the apical membrane of parietal cells and may play a role in the dynamic remodeling of the apical cytoskeleton. Required for the normal polarized localization of the vesicular marker STX4. Required for the correct trafficking of the myelin proteins PMP22 and MAG. Involved in promoting phosphorylation and cytoplasmic retention of transcriptional coactivators YAP1 and WWTR1/TAZ which leads to suppression of TGFB1-dependent transcription of target genes such as CCN2/CTGF, SERPINE1/PAI1, SNAI1/SNAIL1 and SMAD7. The polypeptide is Protein PALS1 (Canis lupus familiaris (Dog)).